The primary structure comprises 177 residues: MSSSTMDNNEPKVLEMVYDSPILPEGSSMDPNIINCINRHINMCLQHTYSSSIIAILDRFLMMNKDELNNTQCHIIKEFMTYEQMAIDHYGGYVNAILYQIRKRPNQHHTIDLFKKIKRTRYDTFKVDPVEFVKKVIGFVSILNKYKPVYSYVLYENVLYDELKCFIDYVETKYFQN.

The protein belongs to the poxviridae OPG036 family.

The protein localises to the host nucleus. Its function is as follows. Plays a role in the inhibition of host innate immune response. Within the host nucleus, inhibits activation of interferon-beta promoter by inhibiting IRF3 activation. The chain is Protein OPG036 (OPG036) from Homo sapiens (Human).